Reading from the N-terminus, the 313-residue chain is Glucan 1,3-beta-glucosidase (313 aa).

Residues 1-23 form the signal peptide; it reads MRFSTTLATAATALFFTASQVSA. Glu-124 serves as the catalytic Proton donor. Asn-202 carries an N-linked (GlcNAc...) asparagine glycan. Glu-233 functions as the Nucleophile in the catalytic mechanism. Asn-284 is a glycosylation site (N-linked (GlcNAc...) asparagine).

The protein belongs to the glycosyl hydrolase 17 family.

It localises to the secreted. Its subcellular location is the cell wall. The enzyme catalyses Successive hydrolysis of beta-D-glucose units from the non-reducing ends of (1-&gt;3)-beta-D-glucans, releasing alpha-glucose.. Functionally, glucanases possibly play a role in cell expansion during growth, in cell-cell fusion during mating, and in spore release during sporulation. This enzyme may be involved in beta-glucan degradation and also function biosynthetically as a transglycosylase. The sequence is that of Glucan 1,3-beta-glucosidase (BGL2) from Saccharomyces cerevisiae (strain ATCC 204508 / S288c) (Baker's yeast).